The primary structure comprises 180 residues: Stathmin-3 (180 aa).

Residues Cys22 and Cys24 are each lipidated (S-palmitoyl cysteine). The region spanning 38 to 180 (GDMEVKQLDK…NKEQREEMSG (143 aa)) is the SLD domain. 7 positions are modified to phosphoserine: Ser50, Ser60, Ser65, Ser68, Ser72, Ser73, and Ser81. The span at 60 to 74 (SPSDLSPESPVLSSP) shows a compositional bias: low complexity. The segment at 60–81 (SPSDLSPESPVLSSPPKRKDAS) is disordered. Residues 75–179 (PKRKDASLEE…RNKEQREEMS (105 aa)) are a coiled coil.

The protein belongs to the stathmin family. In terms of assembly, interacts with STAT3. Interacts with CLU (secreted form); this interaction may act as an important modulator during neuronal differentiation. Post-translationally, N-terminal palmitoylation promotes specific anchoring to the cytosolic leaflet of Golgi membranes and subsequent vesicular trafficking along dendrites and axons. Neuronal Stathmins are substrates for palmitoyltransferases ZDHHC3, ZDHHC7 and ZDHHC15. As to expression, neuron specific.

The protein localises to the golgi apparatus. The protein resides in the cell projection. Its subcellular location is the growth cone. It localises to the axon. It is found in the cytoplasm. The protein localises to the cytosol. Its function is as follows. Exhibits microtubule-destabilizing activity, which is antagonized by STAT3. The sequence is that of Stathmin-3 (Stmn3) from Mus musculus (Mouse).